The sequence spans 565 residues: Fusion glycoprotein F0 (565 aa).

The first 25 residues, 1 to 25 (MATYIQRVQCISALLSVVLTTLVSC), serve as a signal peptide directing secretion. Topologically, residues 26 to 500 (QIPRDRLSNI…VGRWYNSGAT (475 aa)) are extracellular. Cysteine 70 and cysteine 199 form a disulfide bridge. N-linked (GlcNAc...) asparagine; by host glycosylation is present at asparagine 104. A fusion peptide region spans residues 117-141 (FFGAVIGTIALGVATSAQITAGIAL). Positions 142–170 (AEAREAKRDIALIKESMTKTHKSIELLQN) form a coiled coil. Asparagine 245 is a glycosylation site (N-linked (GlcNAc...) asparagine; by host). Residues 269-307 (IKGTVIDVDLERYMVTLSVKIPILSEVPGVLIHKASSIS) form a leucine-zipper region. 4 disulfides stabilise this stretch: cysteine 338–cysteine 347, cysteine 362–cysteine 370, cysteine 394–cysteine 399, and cysteine 401–cysteine 424. Residue asparagine 449 is glycosylated (N-linked (GlcNAc...) asparagine; by host). Residues 466 to 491 (NLAAATDFLQDSRAELEKARKILSEV) adopt a coiled-coil conformation. The helical transmembrane segment at 501–521 (LITIIVVMIVVLVVIIVIVIV) threads the bilayer. Residues 522-565 (LYRLRRSMLMSNPAGRISRDTYTLEPKIRHMYTNGGFDAMTEKR) lie on the Cytoplasmic side of the membrane.

It belongs to the paramyxoviruses fusion glycoprotein family. In terms of assembly, homotrimer of disulfide-linked F1-F2. Interacts with HN and M proteins. In terms of processing, in natural infection, inactive F0 is matured into F1 and F2 outside the cell by one or more trypsin-like, arginine-specific endoprotease secreted by the bronchial epithelial cells. One identified protease that may be involved in this process is tryptase Clara. Unlike most paramyxoviruses, Sendai F0 processing occurs on the cell surface and induces a conformational change in the protein that unmasks the fusion peptide. F0 maturation is a primary determinant for organ tropism and pathogenicity. F1 and F2 display interchain and intrachain disulfide bonds, that are necessary for correct folding and intracellular transport. Post-translationally, N-glycosylated; glycans consist of a mixture of high mannose-type oligosaccharides and of complex-type oligosaccharides. Glycosylation at Asn-245 is essential for membrane localization and F0 cleavage.

It localises to the virion membrane. The protein resides in the host cell membrane. Its function is as follows. Class I viral fusion protein. Under the current model, the protein has at least 3 conformational states: pre-fusion native state, pre-hairpin intermediate state, and post-fusion hairpin state. During viral and plasma cell membrane fusion, the heptad repeat (HR) regions assume a trimer-of-hairpins structure, positioning the fusion peptide in close proximity to the C-terminal region of the ectodomain. The formation of this structure appears to drive apposition and subsequent fusion of viral and plasma cell membranes. Directs fusion of viral and cellular membranes leading to delivery of the nucleocapsid into the cytoplasm. This fusion is pH independent and occurs directly at the outer cell membrane. The trimer of F1-F2 (F protein) interacts with HN tetramer at the virion surface. Upon HN binding to its cellular receptor, the hydrophobic fusion peptide is unmasked and interacts with the cellular membrane, inducing the fusion between cell and virion membranes. Later in infection, F proteins expressed at the plasma membrane of infected cells could mediate fusion with adjacent cells to form syncytia, a cytopathic effect that could lead to tissue necrosis. This chain is Fusion glycoprotein F0 (F), found in Sendai virus (strain Hamamatsu) (SeV).